The primary structure comprises 179 residues: Large ribosomal subunit protein uL5 (179 aa).

Belongs to the universal ribosomal protein uL5 family. In terms of assembly, part of the 50S ribosomal subunit; part of the 5S rRNA/L5/L18/L25 subcomplex. Contacts the 5S rRNA and the P site tRNA. Forms a bridge to the 30S subunit in the 70S ribosome.

Functionally, this is one of the proteins that bind and probably mediate the attachment of the 5S RNA into the large ribosomal subunit, where it forms part of the central protuberance. In the 70S ribosome it contacts protein S13 of the 30S subunit (bridge B1b), connecting the 2 subunits; this bridge is implicated in subunit movement. Contacts the P site tRNA; the 5S rRNA and some of its associated proteins might help stabilize positioning of ribosome-bound tRNAs. The protein is Large ribosomal subunit protein uL5 of Pasteurella multocida (strain Pm70).